A 1822-amino-acid polypeptide reads, in one-letter code: Integrin beta-4 (1822 aa).

A signal peptide spans 1-27; it reads MAGPRPSPWARLLLAALISVSLSGTLA. Residues 28 to 710 are Extracellular-facing; that stretch reads NRCKKAPVKS…HKKKDCPPGS (683 aa). The PSI domain maps to 29–73; the sequence is RCKKAPVKSCTECVRVDKDCAYCTDEMFRDRRCNTQAELLAAGCQ. 8 cysteine pairs are disulfide-bonded: cysteine 30–cysteine 48, cysteine 38–cysteine 455, cysteine 41–cysteine 61, cysteine 51–cysteine 72, cysteine 245–cysteine 288, cysteine 457–cysteine 476, cysteine 468–cysteine 479, and cysteine 481–cysteine 490. A VWFA domain is found at 131–329; that stretch reads DLYILMDFSN…IPIFAVTNYS (199 aa). The Mg(2+) site is built by serine 139 and serine 141. Serine 141, aspartate 144, aspartate 145, and aspartate 176 together coordinate Ca(2+). The segment at 194–199 is involved in NRG1- and IGF1-binding; that stretch reads WPNSDP. Residues asparagine 228, aspartate 230, proline 232, and glutamate 233 each coordinate Ca(2+). Residue glutamate 233 participates in Mg(2+) binding. N-linked (GlcNAc...) asparagine glycosylation is present at asparagine 327. Glutamate 350 is a Ca(2+) binding site. I-EGF domains lie at 457 to 491, 492 to 537, 538 to 574, and 575 to 615; these read CELQKEVRSARCSFNGDFVCGQCVCSEGWSGQTCN, CSTG…QFCE, YDNFQCPRTSGFLCNDRGRCSMGQCVCEPGWTGPSCD, and CPLS…TICE. Asparagine 491 is a glycosylation site (N-linked (GlcNAc...) asparagine). Cystine bridges form between cysteine 492/cysteine 520, cysteine 503/cysteine 518, cysteine 512/cysteine 523, cysteine 525/cysteine 536, cysteine 543/cysteine 557, cysteine 551/cysteine 562, cysteine 564/cysteine 573, cysteine 575/cysteine 598, cysteine 582/cysteine 596, cysteine 590/cysteine 601, and cysteine 603/cysteine 614. N-linked (GlcNAc...) asparagine glycosylation occurs at asparagine 579. Residue asparagine 617 is glycosylated (N-linked (GlcNAc...) asparagine). Disulfide bonds link cysteine 626–cysteine 671, cysteine 632–cysteine 651, cysteine 635–cysteine 648, and cysteine 680–cysteine 706. Residue asparagine 695 is glycosylated (N-linked (GlcNAc...) asparagine). The chain crosses the membrane as a helical span at residues 711-733; sequence FWWLIPLLLLLLPLLALLLLLCW. The interval 732–749 is palmitoylated on several cysteines; the sequence is CWKYCACCKACLALLPCC. The Cytoplasmic portion of the chain corresponds to 734-1822; sequence KYCACCKACL…THMDQQFFQT (1089 aa). Residues serine 771, serine 1069, and serine 1119 each carry the phosphoserine modification. In terms of domain architecture, Calx-beta spans 979 to 1084; that stretch reads VNITIIKEQA…QVRRFHVQLS (106 aa). The segment at 1113–1140 is disordered; sequence TSQMLSSQPPPHGDLGAPQNPNAKAAGS. 2 consecutive Fibronectin type-III domains span residues 1129–1218 and 1222–1321; these read APQN…THQE and EPGR…TQPK. A disordered region spans residues 1400 to 1444; that stretch reads LSASSGRSSDAEAPHGPPDDGGAGGKGGSLPRSATPGPPGEHLVN. Over residues 1418-1427 the composition is skewed to gly residues; that stretch reads DDGGAGGKGG. Residues serine 1454, serine 1457, and serine 1474 each carry the phosphoserine modification. At threonine 1487 the chain carries Phosphothreonine. Phosphoserine is present on serine 1494. Residues 1495–1525 are disordered; that stretch reads LTRSEHSHSTTLPRDYSTLTSVSSHDSRLTA. The span at 1503–1518 shows a compositional bias: polar residues; the sequence is STTLPRDYSTLTSVSS. Threonine 1530 carries the phosphothreonine modification. Fibronectin type-III domains are found at residues 1530–1625 and 1643–1739; these read TPTR…VHPQ and APGP…SQDG. At serine 1791 the chain carries Phosphoserine.

It belongs to the integrin beta chain family. As to quaternary structure, heterodimer of an alpha and a beta subunit. Beta-4 associates with alpha-6. Interacts (via cytoplasmic region) with COL17A1 (via cytoplasmic region). Interacts (via cytoplasmic region) with DST isoform 3 (via N-terminus). Isoform beta-4a interacts (via cytoplasmic domain) with DST (via N-terminus). Interacts with RAC1. ITGA6:ITGB4 is found in a ternary complex with NRG1 and ERBB3. ITGA6:ITGB4 is found in a ternary complex with IGF1 and IGF1R. ITGA6:ITGB4 interacts with IGF2. Interacts with TMEM268; this interaction prevents ITGB4 degradation. In terms of processing, palmitoylated by DHHC3 at several cysteines of the membrane-proximal region, enhancing stability and cell surface expression. Palmitoylation also promotes secondary association with tertaspanins. As to expression, integrin alpha-6/beta-4 is predominantly expressed by epithelia. Isoform beta-4D is also expressed in colon and placenta. Isoform beta-4E is also expressed in epidermis, lung, duodenum, heart, spleen and stomach.

It is found in the cell membrane. The protein resides in the cell junction. Its subcellular location is the hemidesmosome. In terms of biological role, integrin alpha-6/beta-4 is a receptor for laminin. Plays a critical structural role in the hemidesmosome of epithelial cells. Is required for the regulation of keratinocyte polarity and motility. ITGA6:ITGB4 binds to NRG1 (via EGF domain) and this binding is essential for NRG1-ERBB signaling. ITGA6:ITGB4 binds to IGF1 and this binding is essential for IGF1 signaling. ITGA6:ITGB4 binds to IGF2 and this binding is essential for IGF2 signaling. This chain is Integrin beta-4 (ITGB4), found in Homo sapiens (Human).